The chain runs to 455 residues: Glutamyl-tRNA reductase (455 aa).

Substrate-binding positions include 49–52 (TCNR), Ser-109, 114–116 (ETQ), and Gln-120. Catalysis depends on Cys-50, which acts as the Nucleophile. 189–194 (GAGKMG) lines the NADP(+) pocket.

Belongs to the glutamyl-tRNA reductase family. Homodimer.

The catalysed reaction is (S)-4-amino-5-oxopentanoate + tRNA(Glu) + NADP(+) = L-glutamyl-tRNA(Glu) + NADPH + H(+). It participates in porphyrin-containing compound metabolism; protoporphyrin-IX biosynthesis; 5-aminolevulinate from L-glutamyl-tRNA(Glu): step 1/2. Its function is as follows. Catalyzes the NADPH-dependent reduction of glutamyl-tRNA(Glu) to glutamate 1-semialdehyde (GSA). In Geobacillus thermodenitrificans (strain NG80-2), this protein is Glutamyl-tRNA reductase.